The primary structure comprises 343 residues: Branched-chain-amino-acid aminotransferase (343 aa).

Lys-182 carries the post-translational modification N6-(pyridoxal phosphate)lysine.

It belongs to the class-IV pyridoxal-phosphate-dependent aminotransferase family. The cofactor is pyridoxal 5'-phosphate.

The enzyme catalyses L-leucine + 2-oxoglutarate = 4-methyl-2-oxopentanoate + L-glutamate. It carries out the reaction L-isoleucine + 2-oxoglutarate = (S)-3-methyl-2-oxopentanoate + L-glutamate. The catalysed reaction is L-valine + 2-oxoglutarate = 3-methyl-2-oxobutanoate + L-glutamate. It participates in amino-acid biosynthesis; L-isoleucine biosynthesis; L-isoleucine from 2-oxobutanoate: step 4/4. Its pathway is amino-acid biosynthesis; L-leucine biosynthesis; L-leucine from 3-methyl-2-oxobutanoate: step 4/4. It functions in the pathway amino-acid biosynthesis; L-valine biosynthesis; L-valine from pyruvate: step 4/4. In terms of biological role, acts on leucine, isoleucine and valine. The sequence is that of Branched-chain-amino-acid aminotransferase (ilvE) from Haemophilus influenzae (strain ATCC 51907 / DSM 11121 / KW20 / Rd).